The sequence spans 447 residues: GTPase Der (447 aa).

EngA-type G domains follow at residues 4–165 (KIIA…PEEE) and 180–357 (LQIV…KIWN). Residues 10-17 (GRPNVGKS), 57-61 (DTPGL), 119-122 (NKCE), 186-193 (GRPNAGKS), 233-237 (DTAGL), and 298-301 (NKWD) each bind GTP. The KH-like domain occupies 358 to 443 (KKIATSKLNE…PIRFTYVKTK (86 aa)).

Belongs to the TRAFAC class TrmE-Era-EngA-EngB-Septin-like GTPase superfamily. EngA (Der) GTPase family. As to quaternary structure, associates with the 50S ribosomal subunit.

Functionally, GTPase that plays an essential role in the late steps of ribosome biogenesis. This Rickettsia akari (strain Hartford) protein is GTPase Der.